The sequence spans 380 residues: Acyl-coenzyme A diphosphatase NUDT19 (380 aa).

The 257-residue stretch at 8–264 (WKEAATLIVA…KIWIPPPQFY (257 aa)) folds into the Nudix hydrolase domain. A Nudix box motif is present at residues 115–136 (SLIPGEVATRICAIRETFEESG). Mg(2+)-binding residues include glutamate 130 and glutamate 134. A Microbody targeting signal motif is present at residues 378–380 (NKL).

The protein belongs to the Nudix hydrolase family. As to quaternary structure, monomer. The cofactor is Mg(2+). Mn(2+) serves as cofactor.

It is found in the peroxisome. The enzyme catalyses an acyl-CoA + H2O = an acyl-4'-phosphopantetheine + adenosine 3',5'-bisphosphate + 2 H(+). It catalyses the reaction CoA + H2O = (R)-4'-phosphopantetheine + adenosine 3',5'-bisphosphate + 2 H(+). The catalysed reaction is hexanoyl-CoA + H2O = hexanoyl-4'-phosphopantetheine + adenosine 3',5'-bisphosphate + 2 H(+). It carries out the reaction octanoyl-CoA + H2O = S-octanoyl-4'-phosphopantetheine + adenosine 3',5'-bisphosphate + 2 H(+). The enzyme catalyses butanoyl-CoA + H2O = S-butanoyl-4'-phosphopantetheine + adenosine 3',5'-bisphosphate + 2 H(+). It catalyses the reaction propanoyl-CoA + H2O = propanoyl-4'-phosphopantetheine + adenosine 3',5'-bisphosphate + 2 H(+). The catalysed reaction is malonyl-CoA + H2O = malonyl-4'-phosphopantetheine + adenosine 3',5'-bisphosphate + 2 H(+). It carries out the reaction succinyl-CoA + H2O = succinyl-4'-phosphopantetheine + adenosine 3',5'-bisphosphate + 2 H(+). The enzyme catalyses choloyl-CoA + H2O = S-choloyl-4'-phosphopantetheine + adenosine 3',5'-bisphosphate + 2 H(+). It catalyses the reaction 4,8-dimethylnonanoyl-CoA + H2O = S-(4,8-dimethylnonanoyl)-4'-phosphopantetheine + adenosine 3',5'-bisphosphate + 2 H(+). The catalysed reaction is (9Z,12Z,15Z)-octadecatrienoyl-CoA + H2O = S-(9Z,12Z,15Z-octadecatrienoyl)-4'-phosphopantetheine + adenosine 3',5'-bisphosphate + 2 H(+). It carries out the reaction (9Z,12Z)-octadecadienoyl-CoA + H2O = S-(9Z,12Z-octadecadienoyl)-4'-phosphopantetheine + adenosine 3',5'-bisphosphate + 2 H(+). The enzyme catalyses (9Z)-hexadecenoyl-CoA + H2O = S-(9Z-hexadecenoyl)-4'-phosphopantetheine + adenosine 3',5'-bisphosphate + 2 H(+). It catalyses the reaction (9Z)-tetradecenoyl-CoA + H2O = S-(9Z-tetradecenoyl)-4'-phosphopantetheine + adenosine 3',5'-bisphosphate + 2 H(+). The catalysed reaction is (6Z)-octenoyl-CoA + H2O = S-(6Z-octenoyl)-4'-phosphopantetheine + adenosine 3',5'-bisphosphate + 2 H(+). It carries out the reaction hexadecanoyl-CoA + H2O = S-hexadecanoyl-4'-phosphopantetheine + adenosine 3',5'-bisphosphate + 2 H(+). The enzyme catalyses tetradecanoyl-CoA + H2O = tetradecanoyl-4'-phosphopantetheine + adenosine 3',5'-bisphosphate + 2 H(+). It catalyses the reaction dodecanoyl-CoA + H2O = S-dodecanoyl-4'-phosphopantetheine + adenosine 3',5'-bisphosphate + 2 H(+). The catalysed reaction is a 5'-end CoA-ribonucleoside in mRNA + H2O = a 5'-end phospho-adenosine-phospho-ribonucleoside in mRNA + (R)-4'-phosphopantetheine + 2 H(+). Fatty acyl-coenzyme A (CoA) diphosphatase that hydrolyzes fatty acyl-CoA to yield acyl-4'-phosphopantetheine and adenosine 3',5'-bisphosphate. Mediates the hydrolysis of a wide range of CoA esters, including choloyl-CoA and branched-chain fatty-acyl-CoA esters and at low substrate concentrations medium and long-chain fatty-acyl-CoA esters are the primary substrates. Highest activity seen with medium-chain acyl-CoA esters and higher rates of activity seen with the unsaturated acyl-CoA esters compared with the saturated esters. Exhibits decapping activity towards dpCoA-capped RNAs in vitro. The polypeptide is Acyl-coenzyme A diphosphatase NUDT19 (nudt19) (Xenopus laevis (African clawed frog)).